A 126-amino-acid chain; its full sequence is Large ribosomal subunit protein bL12 (126 aa).

This sequence belongs to the bacterial ribosomal protein bL12 family. As to quaternary structure, homodimer. Part of the ribosomal stalk of the 50S ribosomal subunit. Forms a multimeric L10(L12)X complex, where L10 forms an elongated spine to which 2 to 4 L12 dimers bind in a sequential fashion. Binds GTP-bound translation factors.

Its function is as follows. Forms part of the ribosomal stalk which helps the ribosome interact with GTP-bound translation factors. Is thus essential for accurate translation. The chain is Large ribosomal subunit protein bL12 from Chlorobaculum parvum (strain DSM 263 / NCIMB 8327) (Chlorobium vibrioforme subsp. thiosulfatophilum).